Consider the following 230-residue polypeptide: Ion-translocating oxidoreductase complex subunit E (230 aa).

Transmembrane regions (helical) follow at residues 11–31, 39–59, 69–89, 93–113, 132–152, and 182–202; these read GMWA…LLAV, LGLG…VSLV, IPVF…LMNA, GLYL…IIIG, FWMG…REII, and SFLL…LIAL.

It belongs to the NqrDE/RnfAE family. As to quaternary structure, the complex is composed of six subunits: RnfA, RnfB, RnfC, RnfD, RnfE and RnfG.

It localises to the cell inner membrane. Its function is as follows. Part of a membrane-bound complex that couples electron transfer with translocation of ions across the membrane. The polypeptide is Ion-translocating oxidoreductase complex subunit E (Vibrio atlanticus (strain LGP32) (Vibrio splendidus (strain Mel32))).